A 495-amino-acid chain; its full sequence is UDP-N-acetylmuramoyl-L-alanyl-D-glutamate--2,6-diaminopimelate ligase (495 aa).

Residues Leu-27, Ser-29, and 44 to 46 contribute to the UDP-N-acetyl-alpha-D-muramoyl-L-alanyl-D-glutamate site; that span reads HQA. 116-122 lines the ATP pocket; it reads GTNGKTT. Residues Asn-157, 158-159, Ser-185, Gln-191, and Arg-193 each bind UDP-N-acetyl-alpha-D-muramoyl-L-alanyl-D-glutamate; that span reads TT. The residue at position 225 (Lys-225) is an N6-carboxylysine. Meso-2,6-diaminopimelate is bound by residues Arg-390, 414–417, Gly-465, and Glu-469; that span reads DNPR. The Meso-diaminopimelate recognition motif signature appears at 414 to 417; the sequence is DNPR.

It belongs to the MurCDEF family. MurE subfamily. It depends on Mg(2+) as a cofactor. Carboxylation is probably crucial for Mg(2+) binding and, consequently, for the gamma-phosphate positioning of ATP.

The protein localises to the cytoplasm. The catalysed reaction is UDP-N-acetyl-alpha-D-muramoyl-L-alanyl-D-glutamate + meso-2,6-diaminopimelate + ATP = UDP-N-acetyl-alpha-D-muramoyl-L-alanyl-gamma-D-glutamyl-meso-2,6-diaminopimelate + ADP + phosphate + H(+). It participates in cell wall biogenesis; peptidoglycan biosynthesis. In terms of biological role, catalyzes the addition of meso-diaminopimelic acid to the nucleotide precursor UDP-N-acetylmuramoyl-L-alanyl-D-glutamate (UMAG) in the biosynthesis of bacterial cell-wall peptidoglycan. This is UDP-N-acetylmuramoyl-L-alanyl-D-glutamate--2,6-diaminopimelate ligase from Salmonella choleraesuis (strain SC-B67).